We begin with the raw amino-acid sequence, 739 residues long: Oxysterol-binding protein-related protein 9 (739 aa).

The PH domain maps to 2-99 (ASIMEGPLSK…WIHALEETIL (98 aa)). Disordered regions lie at residues 220-292 (TQAS…SYSS) and 306-371 (SSTS…ESVE). The segment covering 249–259 (NLGSRQSPTPI) has biased composition (polar residues). A compositionally biased stretch (low complexity) spans 260–276 (STGSGQSAPSSSLTSPS). 3 stretches are compositionally biased toward polar residues: residues 277 to 292 (HVNLSPNTVPDFSYSS), 306 to 330 (SSTSPKRCMDSSESATALTHSSTGA), and 338 to 352 (TESLNSSMSNGTNEA).

This sequence belongs to the OSBP family.

It carries out the reaction a 1,2-diacyl-sn-glycero-3-phospho-(1D-myo-inositol 4-phosphate)(out) + a 1,2-diacyl-sn-glycero-3-phospho-L-serine(in) = a 1,2-diacyl-sn-glycero-3-phospho-(1D-myo-inositol 4-phosphate)(in) + a 1,2-diacyl-sn-glycero-3-phospho-L-serine(out). Interacts with OSBPL11 to function as lipid transfer proteins. Together they form a heterodimer that localizes at the ER-trans-Golgi membrane contact sites, and exchanges phosphatidylserine (1,2-diacyl-sn-glycero-3-phospho-L-serine, PS) for phosphatidylinositol-4-phosphate (1,2-diacyl-sn-glycero-3-phospho-(1D-myo-inositol 4-phosphate), PI(4)P) between the two organelles, a step that is critical for sphingomyelin synthesis in the Golgi complex. This Xenopus tropicalis (Western clawed frog) protein is Oxysterol-binding protein-related protein 9 (osbpl9).